The chain runs to 407 residues: Serine/threonine transporter SstT (407 aa).

Transmembrane regions (helical) follow at residues 12–32 (GNLI…GISS), 42–62 (LGIL…FILI), 81–101 (IIIL…LANF), 141–161 (ALSS…GIAL), 179–199 (VLKI…GLVA), 218–238 (ILLV…IVFF), 245–267 (FPLI…SSAA), 288–308 (ISIP…IAIL), and 330–350 (IIAT…LLLI).

It belongs to the dicarboxylate/amino acid:cation symporter (DAACS) (TC 2.A.23) family.

Its subcellular location is the cell inner membrane. The enzyme catalyses L-serine(in) + Na(+)(in) = L-serine(out) + Na(+)(out). It catalyses the reaction L-threonine(in) + Na(+)(in) = L-threonine(out) + Na(+)(out). Functionally, involved in the import of serine and threonine into the cell, with the concomitant import of sodium (symport system). In Campylobacter jejuni subsp. jejuni serotype O:2 (strain ATCC 700819 / NCTC 11168), this protein is Serine/threonine transporter SstT.